A 90-amino-acid polypeptide reads, in one-letter code: MSRTVFCQHLNKEADGLDFQLYPGELGKKIFDNISKEAWTEWQKKQTMLINEKKLNMMEPTARNFLETQMQAYLFEGKEPDIEGYVPPKS.

Belongs to the Fe(2+)-trafficking protein family.

Its function is as follows. Could be a mediator in iron transactions between iron acquisition and iron-requiring processes, such as synthesis and/or repair of Fe-S clusters in biosynthetic enzymes. The protein is Probable Fe(2+)-trafficking protein of Pseudoalteromonas atlantica (strain T6c / ATCC BAA-1087).